We begin with the raw amino-acid sequence, 363 residues long: Phosphoserine aminotransferase (363 aa).

L-glutamate is bound at residue Arg42. Residues 76-77, Trp104, Thr155, Asp175, and Gln198 contribute to the pyridoxal 5'-phosphate site; that span reads AR. Lys199 is modified (N6-(pyridoxal phosphate)lysine). 240–241 is a binding site for pyridoxal 5'-phosphate; that stretch reads NT.

This sequence belongs to the class-V pyridoxal-phosphate-dependent aminotransferase family. SerC subfamily. Homodimer. It depends on pyridoxal 5'-phosphate as a cofactor.

It is found in the cytoplasm. It catalyses the reaction O-phospho-L-serine + 2-oxoglutarate = 3-phosphooxypyruvate + L-glutamate. The catalysed reaction is 4-(phosphooxy)-L-threonine + 2-oxoglutarate = (R)-3-hydroxy-2-oxo-4-phosphooxybutanoate + L-glutamate. Its pathway is amino-acid biosynthesis; L-serine biosynthesis; L-serine from 3-phospho-D-glycerate: step 2/3. It participates in cofactor biosynthesis; pyridoxine 5'-phosphate biosynthesis; pyridoxine 5'-phosphate from D-erythrose 4-phosphate: step 3/5. Its function is as follows. Catalyzes the reversible conversion of 3-phosphohydroxypyruvate to phosphoserine and of 3-hydroxy-2-oxo-4-phosphonooxybutanoate to phosphohydroxythreonine. In Edwardsiella ictaluri (strain 93-146), this protein is Phosphoserine aminotransferase (serC).